The following is a 394-amino-acid chain: Glycerol-3-phosphate dehydrogenase [NAD(+)] 2 (394 aa).

Residues 41 to 46, lysine 152, and alanine 185 contribute to the NAD(+) site; that span reads GSGNWG. A substrate-binding site is contributed by lysine 152. The Proton acceptor role is filled by lysine 243. The NAD(+) site is built by arginine 308 and glutamine 337. 308-309 is a substrate binding site; that stretch reads RN.

It belongs to the NAD-dependent glycerol-3-phosphate dehydrogenase family.

It catalyses the reaction sn-glycerol 3-phosphate + NAD(+) = dihydroxyacetone phosphate + NADH + H(+). The chain is Glycerol-3-phosphate dehydrogenase [NAD(+)] 2 (gpd2) from Cyberlindnera jadinii (Torula yeast).